The following is a 393-amino-acid chain: NAD(P)H-quinone oxidoreductase subunit H, chloroplastic (393 aa).

This sequence belongs to the complex I 49 kDa subunit family. As to quaternary structure, NDH is composed of at least 16 different subunits, 5 of which are encoded in the nucleus.

The protein resides in the plastid. The protein localises to the chloroplast thylakoid membrane. It carries out the reaction a plastoquinone + NADH + (n+1) H(+)(in) = a plastoquinol + NAD(+) + n H(+)(out). It catalyses the reaction a plastoquinone + NADPH + (n+1) H(+)(in) = a plastoquinol + NADP(+) + n H(+)(out). Its function is as follows. NDH shuttles electrons from NAD(P)H:plastoquinone, via FMN and iron-sulfur (Fe-S) centers, to quinones in the photosynthetic chain and possibly in a chloroplast respiratory chain. The immediate electron acceptor for the enzyme in this species is believed to be plastoquinone. Couples the redox reaction to proton translocation, and thus conserves the redox energy in a proton gradient. The chain is NAD(P)H-quinone oxidoreductase subunit H, chloroplastic from Piper cenocladum (Ant piper).